A 164-amino-acid polypeptide reads, in one-letter code: Transcriptional repressor NrdR (164 aa).

Residues 3-34 fold into a zinc finger; the sequence is CPFCSAQDTKVIDSRLVADGVQIRRRRECLSC. An ATP-cone domain is found at 49 to 139; sequence PRLVKTDGTR…VYRSFQDISE (91 aa).

This sequence belongs to the NrdR family. Zn(2+) is required as a cofactor.

In terms of biological role, negatively regulates transcription of bacterial ribonucleotide reductase nrd genes and operons by binding to NrdR-boxes. The polypeptide is Transcriptional repressor NrdR (Alcanivorax borkumensis (strain ATCC 700651 / DSM 11573 / NCIMB 13689 / SK2)).